The chain runs to 134 residues: Phospholipase A2 (134 aa).

Residues W8, G10, and G12 each coordinate Ca(2+). Disulfide bonds link C9–C31, C30–C70, C37–C63, C61–C95, and C105–C113. N-linked (GlcNAc...) asparagine glycosylation occurs at N13. H34 is a catalytic residue. Ca(2+) is bound at residue D35. D64 is a catalytic residue.

It belongs to the phospholipase A2 family. Group III subfamily. Ca(2+) serves as cofactor. In terms of tissue distribution, expressed by the venom gland.

It localises to the secreted. The catalysed reaction is a 1,2-diacyl-sn-glycero-3-phosphocholine + H2O = a 1-acyl-sn-glycero-3-phosphocholine + a fatty acid + H(+). PLA2 catalyzes the calcium-dependent hydrolysis of the 2-acyl groups in 3-sn-phosphoglycerides. This Apis dorsata (Giant honeybee) protein is Phospholipase A2.